The primary structure comprises 249 residues: tRNA (guanine-N(1)-)-methyltransferase (249 aa).

Residues Gly-113 and 132-137 (VGDFVV) contribute to the S-adenosyl-L-methionine site.

This sequence belongs to the RNA methyltransferase TrmD family. Homodimer.

It is found in the cytoplasm. It carries out the reaction guanosine(37) in tRNA + S-adenosyl-L-methionine = N(1)-methylguanosine(37) in tRNA + S-adenosyl-L-homocysteine + H(+). Specifically methylates guanosine-37 in various tRNAs. The polypeptide is tRNA (guanine-N(1)-)-methyltransferase (Desulforudis audaxviator (strain MP104C)).